Reading from the N-terminus, the 384-residue chain is MAP kinase-activated protein kinase 3 (384 aa).

Position 1 is an N-acetylmethionine (Met-1). The disordered stretch occupies residues Met-1 to Arg-33. A compositionally biased stretch (low complexity) spans Pro-14–Gly-31. A Protein kinase domain is found at Gln-46–Ile-306. ATP contacts are provided by residues Leu-52–Val-60 and Lys-75. Catalysis depends on Asp-168, which acts as the Proton acceptor. Phosphothreonine; by MAPK14 is present on Thr-203. The residue at position 253 (Ser-253) is a Phosphoserine; by MAPK14. Ser-309 carries the post-translational modification Phosphoserine; by autocatalysis. Positions Ser-309–Arg-345 are autoinhibitory helix. At Thr-315 the chain carries Phosphothreonine; by MAPK14. The Nuclear export signal (NES) motif lies at Met-337 to Val-346. The interval Asp-347–Gln-371 is p38 MAPK-binding site. 2 consecutive short sequence motifs (bipartite nuclear localization signal) follow at residues Lys-352 to Asp-355 and Lys-366 to Lys-370. Residues Ser-359 to Gln-384 form a disordered region. Positions Gly-372 to Gln-384 are enriched in polar residues.

The protein belongs to the protein kinase superfamily. CAMK Ser/Thr protein kinase family. In terms of assembly, heterodimer with p38-alpha/MAPK14. The heterodimer with p38-alpha/MAPK14 forms a stable complex: molecules are positioned 'face to face' so that the ATP-binding sites of both kinases are at the heterodimer interface. Interacts with TCF3 and with polycomb proteins, such as PCH2 and BMI1/PCGF4. Phosphorylated and activated by MAPK1/ERK2 and MAPK3/ERK1. Phosphorylated and activated by MAP kinase p38-alpha/MAPK14 at Thr-203, Ser-253 and Thr-315.

It localises to the nucleus. The protein resides in the cytoplasm. The enzyme catalyses L-seryl-[protein] + ATP = O-phospho-L-seryl-[protein] + ADP + H(+). The catalysed reaction is L-threonyl-[protein] + ATP = O-phospho-L-threonyl-[protein] + ADP + H(+). With respect to regulation, activated following phosphorylation by p38-alpha/MAPK14 following various stresses. Inhibited by ligand 5B (2'-[2-(1,3-benzodioxol-5-yl)pyrimidin-4-yl]-5',6'-dihydrospiro[piperidine-4,7'-pyrrolo[3,2-c]pyridin]- 4'(1'h)-one) and ligand P4O (2-[2-(2-fluorophenyl)pyridin-4-yl]-1,5,6,7-tetrahydro- 4h-pyrrolo[3,2-c]pyridin-4-one), 2 ATP-competitive inhibitors. Its function is as follows. Stress-activated serine/threonine-protein kinase involved in cytokines production, endocytosis, cell migration, chromatin remodeling and transcriptional regulation. Following stress, it is phosphorylated and activated by MAP kinase p38-alpha/MAPK14, leading to phosphorylation of substrates. Phosphorylates serine in the peptide sequence, Hyd-X-R-X(2)-S, where Hyd is a large hydrophobic residue. MAPKAPK2 and MAPKAPK3, share the same function and substrate specificity, but MAPKAPK3 kinase activity and level in protein expression are lower compared to MAPKAPK2. Phosphorylates HSP27/HSPB1, KRT18, KRT20, RCSD1, RPS6KA3, TAB3 and TTP/ZFP36. Mediates phosphorylation of HSP27/HSPB1 in response to stress, leading to dissociate HSP27/HSPB1 from large small heat-shock protein (sHsps) oligomers and impair their chaperone activities and ability to protect against oxidative stress effectively. Involved in inflammatory response by regulating tumor necrosis factor (TNF) and IL6 production post-transcriptionally: acts by phosphorylating AU-rich elements (AREs)-binding proteins, such as TTP/ZFP36, leading to regulate the stability and translation of TNF and IL6 mRNAs. Phosphorylation of TTP/ZFP36, a major post-transcriptional regulator of TNF, promotes its binding to 14-3-3 proteins and reduces its ARE mRNA affinity leading to inhibition of dependent degradation of ARE-containing transcript. Involved in toll-like receptor signaling pathway (TLR) in dendritic cells: required for acute TLR-induced macropinocytosis by phosphorylating and activating RPS6KA3. Also acts as a modulator of Polycomb-mediated repression. In Rattus norvegicus (Rat), this protein is MAP kinase-activated protein kinase 3 (Mapkapk3).